A 919-amino-acid polypeptide reads, in one-letter code: MLX-interacting protein (919 aa).

The segment at Met1–Arg72 is disordered. At Ala2 the chain carries N-acetylalanine. Residues Ser9, Ser27, Ser33, and Ser39 each carry the phosphoserine modification. Residues Ser27–Glu37 are compositionally biased toward acidic residues. The span at Ser44 to Ala56 shows a compositional bias: low complexity. The required for cytoplasmic localization stretch occupies residues Arg73–Asp327. Residues Asn322–Pro445 are transactivation domain. Disordered stretches follow at residues Lys542–Lys562 and Asp633–Lys712. At Ser669 the chain carries Phosphoserine. Over residues Pro670–Gly685 the composition is skewed to polar residues. Residues Gln686 to Ser706 show a composition bias toward low complexity. One can recognise a bHLH domain in the interval Asn719–Leu769. The leucine-zipper stretch occupies residues Leu769–Leu790. Residues Trp832 to Val881 form a mediates heterotypic interactions between MLXIP and MLX and is required for cytoplasmic localization region.

Efficient DNA binding requires dimerization with another bHLH protein. Binds DNA as a homodimer or a heterodimer with MLX. In terms of tissue distribution, widely expressed in adult tissues. Most abundant in skeletal muscle.

The protein localises to the cytoplasm. It localises to the nucleus. The protein resides in the mitochondrion outer membrane. In terms of biological role, binds DNA as a heterodimer with MLX and activates transcription. Binds to the canonical E box sequence 5'-CACGTG-3'. Plays a role in transcriptional activation of glycolytic target genes. Involved in glucose-responsive gene regulation. The polypeptide is MLX-interacting protein (Homo sapiens (Human)).